The sequence spans 84 residues: Replication regulatory protein repA2 (84 aa).

A compositionally biased stretch (polar residues) spans 1–13 (MSQTENAVTSSSG). The interval 1 to 31 (MSQTENAVTSSSGAKRAYRKGNPLSDAEKQR) is disordered.

This protein is involved in the determination of copy number in gene replication. It binds to the repA promoter thus inhibiting the synthesis of the mRNA for the initiator protein repA. The sequence is that of Replication regulatory protein repA2 (repA2) from Escherichia coli O157:H7.